An 88-amino-acid polypeptide reads, in one-letter code: Small ribosomal subunit protein bS20 (88 aa).

Belongs to the bacterial ribosomal protein bS20 family.

Functionally, binds directly to 16S ribosomal RNA. The sequence is that of Small ribosomal subunit protein bS20 from Heliobacterium modesticaldum (strain ATCC 51547 / Ice1).